The following is a 569-amino-acid chain: MDFFSEYGDSSRYKIQEIVGKGSYGVVCSAIDQHTGDKVAIKKIHNIFEHLSDAARILREIKLLRLLRHPDIVEIKHIMLPPSRRDFKDIYVVFELMDTDLHQVIKANDDLTKEHHQFFLYQMLRALKYIHTANVYHRDLKPKNILANANCKLKICDFGLARVAFNDTPTTVFWTDYVATRWYRAPELCGSFFSKYSPAIDTWSIGCIFAEILTGKPLFPGKNVVHQLDLMTDLLGTPSMDAISRIRNDKARRYLSSMRRKQPVPFSEKFPNVDPLALKLLQRLLAFDPKDRPTAEEALADPYFKGLAKVEREPSCQPISKMEFEFERRKVTKDDIKELIFREILEYHPQLLKDYMNGSENTSFLYPSAVDNFRRQFAILEENGGKSGALDRKHVSLPRATTVHSTSIPPNEGLDATSQVTQRIPTARPGRTVGPVLPFENPGAADPHSARRVVRNPMVPPAAANKSGYSYNLKSDYSDRQHQEELEKDRVQYRPAQHLMDAKVAPDTAPDIRSSQYYFTRSAPRTDLTDRAALQGSMLYGIAPFNGIAAVAGGYSKVGAVQYGVSRMY.

In terms of domain architecture, Protein kinase spans 13-304 (YKIQEIVGKG…AEEALADPYF (292 aa)). ATP is bound by residues 19–27 (VGKGSYGVV) and K42. The active-site Proton acceptor is D139. T175 is subject to Phosphothreonine. Residues 175–177 (TDY) carry the TXY motif. Phosphotyrosine is present on Y177. The tract at residues 401–420 (TTVHSTSIPPNEGLDATSQV) is disordered.

It belongs to the protein kinase superfamily. CMGC Ser/Thr protein kinase family. MAP kinase subfamily. Post-translationally, dually phosphorylated on Thr-175 and Tyr-177, which activates the enzyme.

The enzyme catalyses L-seryl-[protein] + ATP = O-phospho-L-seryl-[protein] + ADP + H(+). It catalyses the reaction L-threonyl-[protein] + ATP = O-phospho-L-threonyl-[protein] + ADP + H(+). Its activity is regulated as follows. Activated by threonine and tyrosine phosphorylation. The polypeptide is Mitogen-activated protein kinase 7 (MPK7) (Oryza sativa subsp. japonica (Rice)).